The following is a 100-amino-acid chain: uncharacterized protein (100 aa).

The 100-residue stretch at 1–100 (MEPIEVFKAL…KLADFLKTEI (100 aa)) folds into the HTH arsR-type domain. Residues 44 to 67 (VSQITDKLKMTQSTASQYLTILLR) constitute a DNA-binding region (H-T-H motif).

This is an uncharacterized protein from Bacillus subtilis (strain 168).